We begin with the raw amino-acid sequence, 231 residues long: Cytochrome c oxidase subunit 2 (231 aa).

Residues 1-14 (MAHPAQLGLQNATS) are Mitochondrial intermembrane-facing. The helical transmembrane segment at 15-45 (PIMEELIAFHDHALMIIFLISSLVLYVISLM) threads the bilayer. Residues 46 to 59 (LTTKLTHTSTMNAQ) lie on the Mitochondrial matrix side of the membrane. A helical transmembrane segment spans residues 60 to 87 (EIEMIWTILPAIILIMIALPSLRILYMT). Residues 88–231 (DEFNKPYLTL…WASYLYIVSL (144 aa)) lie on the Mitochondrial intermembrane side of the membrane. Cu cation-binding residues include histidine 161, cysteine 196, glutamate 198, cysteine 200, histidine 204, and methionine 207. Position 198 (glutamate 198) interacts with Mg(2+).

This sequence belongs to the cytochrome c oxidase subunit 2 family. As to quaternary structure, component of the cytochrome c oxidase (complex IV, CIV), a multisubunit enzyme composed of 14 subunits. The complex is composed of a catalytic core of 3 subunits MT-CO1, MT-CO2 and MT-CO3, encoded in the mitochondrial DNA, and 11 supernumerary subunits COX4I, COX5A, COX5B, COX6A, COX6B, COX6C, COX7A, COX7B, COX7C, COX8 and NDUFA4, which are encoded in the nuclear genome. The complex exists as a monomer or a dimer and forms supercomplexes (SCs) in the inner mitochondrial membrane with NADH-ubiquinone oxidoreductase (complex I, CI) and ubiquinol-cytochrome c oxidoreductase (cytochrome b-c1 complex, complex III, CIII), resulting in different assemblies (supercomplex SCI(1)III(2)IV(1) and megacomplex MCI(2)III(2)IV(2)). Found in a complex with TMEM177, COA6, COX18, COX20, SCO1 and SCO2. Interacts with TMEM177 in a COX20-dependent manner. Interacts with COX20. Interacts with COX16. The cofactor is Cu cation.

Its subcellular location is the mitochondrion inner membrane. It catalyses the reaction 4 Fe(II)-[cytochrome c] + O2 + 8 H(+)(in) = 4 Fe(III)-[cytochrome c] + 2 H2O + 4 H(+)(out). Component of the cytochrome c oxidase, the last enzyme in the mitochondrial electron transport chain which drives oxidative phosphorylation. The respiratory chain contains 3 multisubunit complexes succinate dehydrogenase (complex II, CII), ubiquinol-cytochrome c oxidoreductase (cytochrome b-c1 complex, complex III, CIII) and cytochrome c oxidase (complex IV, CIV), that cooperate to transfer electrons derived from NADH and succinate to molecular oxygen, creating an electrochemical gradient over the inner membrane that drives transmembrane transport and the ATP synthase. Cytochrome c oxidase is the component of the respiratory chain that catalyzes the reduction of oxygen to water. Electrons originating from reduced cytochrome c in the intermembrane space (IMS) are transferred via the dinuclear copper A center (CU(A)) of subunit 2 and heme A of subunit 1 to the active site in subunit 1, a binuclear center (BNC) formed by heme A3 and copper B (CU(B)). The BNC reduces molecular oxygen to 2 water molecules using 4 electrons from cytochrome c in the IMS and 4 protons from the mitochondrial matrix. This chain is Cytochrome c oxidase subunit 2 (MT-CO2), found in Alouatta palliata (Mantled howler monkey).